Reading from the N-terminus, the 245-residue chain is Eukaryotic translation initiation factor 6 (245 aa).

Tyr113 carries the phosphotyrosine modification. At Thr165 the chain carries Phosphothreonine. At Ser166 the chain carries Phosphoserine. Phosphoserine; by CK1 occurs at positions 174 and 175. Phosphoserine; by PKC is present on Ser235. 2 positions are modified to phosphoserine: Ser239 and Ser243.

This sequence belongs to the eIF-6 family. Monomer. Associates with the 60S ribosomal subunit. Interacts with RACK1. Interacts with DICER1, AGO2, TARBP2, MOV10 and RPL7A; they form a large RNA-induced silencing complex (RISC). Phosphorylation at Ser-174 and Ser-175 by CSNK1D/CK1 promotes nuclear export. Post-translationally, ufmylated by UFL1. As to expression, expressed at very high levels in colon carcinoma with lower levels in normal colon and ileum and lowest levels in kidney and muscle (at protein level).

The protein resides in the cytoplasm. It localises to the nucleus. It is found in the nucleolus. Functionally, binds to the 60S ribosomal subunit and prevents its association with the 40S ribosomal subunit to form the 80S initiation complex in the cytoplasm. Behaves as a stimulatory translation initiation factor downstream insulin/growth factors. Is also involved in ribosome biogenesis. Associates with pre-60S subunits in the nucleus and is involved in its nuclear export. Cytoplasmic release of TIF6 from 60S subunits and nuclear relocalization is promoted by a RACK1 (RACK1)-dependent protein kinase C activity. In tissues responsive to insulin, controls fatty acid synthesis and glycolysis by exerting translational control of adipogenic transcription factors such as CEBPB, CEBPD and ATF4 that have G/C rich or uORF in their 5'UTR. Required for ROS-dependent megakaryocyte maturation and platelets formation, controls the expression of mitochondrial respiratory chain genes involved in reactive oxygen species (ROS) synthesis. Involved in miRNA-mediated gene silencing by the RNA-induced silencing complex (RISC). Required for both miRNA-mediated translational repression and miRNA-mediated cleavage of complementary mRNAs by RISC. Modulates cell cycle progression and global translation of pre-B cells, its activation seems to be rate-limiting in tumorigenesis and tumor growth. The protein is Eukaryotic translation initiation factor 6 of Homo sapiens (Human).